The following is a 295-amino-acid chain: MAKQIVLALAFAALVAFATAHTTIITTTIEDENPISGQRQVSQRIQGQRLNQCRMFLQQGQNIPREFDNPQMGRQQEQQLQQCCQELQNIEGQCQCEAVKQVFREAQQQVQQQQGRQLVPFRGSQQTQQLKQKAQILPNVCNLQSRRCEIGTITTTVTESNIDIPFRDRPFGTGSQQCRETEIQRPVGECQRFVEQQMQQSPRSTRPYQQRPGQQQQQQRGLQQQCCNELQNVKRECHCEAIQEVARRVMRQPQQQQQQRRGQFGGQEMETARRVIQNLPNQCDLEVQQCTTCTG.

The N-terminal stretch at 1–20 (MAKQIVLALAFAALVAFATA) is a signal peptide. Positions 21–161 (HTTIITTTIE…TITTTVTESN (141 aa)) are excised as a propeptide. Over residues 195–208 (EQQMQQSPRSTRPY) the composition is skewed to polar residues. Positions 195-215 (EQQMQQSPRSTRPYQQRPGQQ) are disordered.

Belongs to the 2S seed storage albumins family. The 38 kDa precursor may be cleaved into two polypeptides of approximately the same size. The mature protein is composed of a single polypeptide containing one or more intra-molecular disulfide linkages.

This is a 2S seed storage protein. This is 2S seed storage protein (HAG5) from Helianthus annuus (Common sunflower).